A 290-amino-acid polypeptide reads, in one-letter code: ADP-dependent (S)-NAD(P)H-hydrate dehydratase (290 aa).

Residues asparagine 5 to isoleucine 278 enclose the YjeF C-terminal domain. Alanine 40, glycine 103, and histidine 152 together coordinate (6S)-NADPHX. Glycine 218 contributes to the AMP binding site. Aspartate 219 is a (6S)-NADPHX binding site.

It belongs to the NnrD/CARKD family. Homotetramer. Mg(2+) is required as a cofactor.

It carries out the reaction (6S)-NADHX + ADP = AMP + phosphate + NADH + H(+). The enzyme catalyses (6S)-NADPHX + ADP = AMP + phosphate + NADPH + H(+). Its function is as follows. Catalyzes the dehydration of the S-form of NAD(P)HX at the expense of ADP, which is converted to AMP. Together with NAD(P)HX epimerase, which catalyzes the epimerization of the S- and R-forms, the enzyme allows the repair of both epimers of NAD(P)HX, a damaged form of NAD(P)H that is a result of enzymatic or heat-dependent hydration. This chain is ADP-dependent (S)-NAD(P)H-hydrate dehydratase, found in Streptococcus pneumoniae (strain ATCC BAA-255 / R6).